The sequence spans 1049 residues: Protein argonaute 12 (1049 aa).

The span at 1 to 53 (MSSRGGGGGGRRGGRGGGGGREGGGGGGGGGGRGGQGRGDLGVVGERQGGGRG) shows a compositional bias: gly residues. Disordered stretches follow at residues 1-101 (MSSR…GVQV) and 144-192 (GGAP…KAVT). The segment covering 54 to 65 (AGERGGRHDAPR) has biased composition (basic and acidic residues). A compositionally biased stretch (gly residues) spans 66 to 76 (GRGGVAVGAGA). Residues 144-160 (GGAPPAGQGSSLAAAQG) show a composition bias toward low complexity. Residues 404 to 515 (PVMDFAVQYL…LPMEVCSILE (112 aa)) enclose the PAZ domain. Residues 694–1012 (LLIVILTEIS…GAFRARYYME (319 aa)) form the Piwi domain.

This sequence belongs to the argonaute family. Ago subfamily.

In terms of biological role, probably involved in the RNA silencing pathway. May bind to short RNAs such as microRNAs (miRNAs) or short interfering RNAs (siRNAs), and represses the translation of mRNAs which are complementary to them. In Oryza sativa subsp. japonica (Rice), this protein is Protein argonaute 12 (AGO12).